A 144-amino-acid chain; its full sequence is Large ribosomal subunit protein uL15 (144 aa).

Residues 1–57 are disordered; the sequence is MELNNLKPAEGAKHAKRRVGRGIGSGLGKTAGRGHKGQKSRSGGFHKVGFEGGQMPL. Gly residues predominate over residues 21-31; the sequence is RGIGSGLGKTA.

The protein belongs to the universal ribosomal protein uL15 family. In terms of assembly, part of the 50S ribosomal subunit.

Binds to the 23S rRNA. In Paraburkholderia xenovorans (strain LB400), this protein is Large ribosomal subunit protein uL15.